The following is a 259-amino-acid chain: Acyl-[acyl-carrier-protein]--UDP-N-acetylglucosamine O-acyltransferase (259 aa).

This sequence belongs to the transferase hexapeptide repeat family. LpxA subfamily. In terms of assembly, homotrimer.

It localises to the cytoplasm. It catalyses the reaction a (3R)-hydroxyacyl-[ACP] + UDP-N-acetyl-alpha-D-glucosamine = a UDP-3-O-[(3R)-3-hydroxyacyl]-N-acetyl-alpha-D-glucosamine + holo-[ACP]. It participates in glycolipid biosynthesis; lipid IV(A) biosynthesis; lipid IV(A) from (3R)-3-hydroxytetradecanoyl-[acyl-carrier-protein] and UDP-N-acetyl-alpha-D-glucosamine: step 1/6. In terms of biological role, involved in the biosynthesis of lipid A, a phosphorylated glycolipid that anchors the lipopolysaccharide to the outer membrane of the cell. The sequence is that of Acyl-[acyl-carrier-protein]--UDP-N-acetylglucosamine O-acyltransferase from Psychrobacter sp. (strain PRwf-1).